Reading from the N-terminus, the 170-residue chain is MAADDHFSLFGLPTRFALDPVQLEQAWRAVAARVHPDRYATASAAERRVAMQWAARANEAYRQLRDPMLRARYLCEQAGVDLQTESNTAMDPAFLMQQMEWREMLDDARRDPAAFAALRAELEQARLRMQQTLSELIDERGDYQQAGTKVREWMFVEKLAQELSAAQPMQ.

The 75-residue stretch at 5-79 (DHFSLFGLPT…RARYLCEQAG (75 aa)) folds into the J domain.

The protein belongs to the HscB family. Interacts with HscA and stimulates its ATPase activity.

In terms of biological role, co-chaperone involved in the maturation of iron-sulfur cluster-containing proteins. Seems to help targeting proteins to be folded toward HscA. This Bordetella bronchiseptica (strain ATCC BAA-588 / NCTC 13252 / RB50) (Alcaligenes bronchisepticus) protein is Co-chaperone protein HscB homolog.